Here is a 416-residue protein sequence, read N- to C-terminus: Glutamyl-tRNA reductase (416 aa).

Substrate is bound by residues Thr-49 to Arg-52, Ser-105, Glu-110 to Gln-112, and Gln-116. Cys-50 serves as the catalytic Nucleophile. Gly-185 to Ile-190 is a binding site for NADP(+).

This sequence belongs to the glutamyl-tRNA reductase family. In terms of assembly, homodimer.

The enzyme catalyses (S)-4-amino-5-oxopentanoate + tRNA(Glu) + NADP(+) = L-glutamyl-tRNA(Glu) + NADPH + H(+). Its pathway is porphyrin-containing compound metabolism; protoporphyrin-IX biosynthesis; 5-aminolevulinate from L-glutamyl-tRNA(Glu): step 1/2. In terms of biological role, catalyzes the NADPH-dependent reduction of glutamyl-tRNA(Glu) to glutamate 1-semialdehyde (GSA). The sequence is that of Glutamyl-tRNA reductase from Shewanella sediminis (strain HAW-EB3).